A 723-amino-acid chain; its full sequence is Nuclear intron maturase 3, mitochondrial (723 aa).

The N-terminal 26 residues, 1 to 26, are a transit peptide targeting the mitochondrion; that stretch reads MVLRLRVHSFYNRGISFLVSSSLRNL. The intron maturase type-2; degenerate stretch occupies residues 532 to 597; sequence VSAPEELVRK…HYTKDLRVSD (66 aa). The THAP-type zinc-finger motif lies at 646–700; it reads CAASFCERSDTIMHRVHLLQNRLHINPLDEEKWVPGMGTIHSALNRKCLPLCSTH.

The protein belongs to the plant nuclear intron maturase (nMat) family.

The protein resides in the mitochondrion. Nuclear-encoded maturase required for splicing of group-II introns in mitochondria. Necessary for mitochondrial biogenesis during early developmental stages. This chain is Nuclear intron maturase 3, mitochondrial, found in Arabidopsis thaliana (Mouse-ear cress).